The sequence spans 396 residues: Tyrosine--tRNA ligase (396 aa).

Residue tyrosine 36 coordinates L-tyrosine. Residues 41 to 50 (PTANSLHIGN) carry the 'HIGH' region motif. 2 residues coordinate L-tyrosine: tyrosine 165 and glutamine 169. The 'KMSKS' region signature appears at 225–229 (KMGKT). Lysine 228 serves as a coordination point for ATP. Residues 331-394 (TNLIDYLVET…KKSFLTIKTV (64 aa)) form the S4 RNA-binding domain.

It belongs to the class-I aminoacyl-tRNA synthetase family. TyrS type 1 subfamily. As to quaternary structure, homodimer.

It localises to the cytoplasm. The catalysed reaction is tRNA(Tyr) + L-tyrosine + ATP = L-tyrosyl-tRNA(Tyr) + AMP + diphosphate + H(+). Catalyzes the attachment of tyrosine to tRNA(Tyr) in a two-step reaction: tyrosine is first activated by ATP to form Tyr-AMP and then transferred to the acceptor end of tRNA(Tyr). This chain is Tyrosine--tRNA ligase, found in Mycoplasma genitalium (strain ATCC 33530 / DSM 19775 / NCTC 10195 / G37) (Mycoplasmoides genitalium).